We begin with the raw amino-acid sequence, 51 residues long: Nawaprin (51 aa).

The region spanning 1–50 (NEKSGSCPDMSMPIPPLGICKTLCNSDSGCPNVQKCCKNGCGFMTCTTPV) is the WAP domain. 4 disulfide bridges follow: Cys7-Cys37, Cys20-Cys41, Cys24-Cys36, and Cys30-Cys46.

In terms of tissue distribution, expressed by the venom gland.

The protein resides in the secreted. In terms of biological role, damages membranes of susceptible bacteria. Has no hemolytic activity. Not toxic to mice. Does not inhibit the proteinases elastase and cathepsin G. The protein is Nawaprin of Naja nigricollis (Black-necked spitting cobra).